Reading from the N-terminus, the 147-residue chain is MVHLSSEEKSAVTALWGKVNVEEVGGEALGRLLVVYPWTQRFFESFGDLSSANAVMNNPKVKAHGKKVLAAFSEGLSHLDNLKGTFAKLSELHCDKLHVDPENFRLLGNVLVIVLSHHFGKEFTPQVQAAYQKVVAGVANALAHKYH.

V2 bears the N-acetylvaline mark. A Globin domain is found at 3-147 (HLSSEEKSAV…VANALAHKYH (145 aa)). T13 bears the Phosphothreonine mark. S45 carries the phosphoserine modification. An N6-acetyllysine modification is found at K60. H64 is a heme b binding site. The residue at position 83 (K83) is an N6-acetyllysine. Residue H93 participates in heme b binding. C94 carries the post-translational modification S-nitrosocysteine. K145 is subject to N6-acetyllysine.

The protein belongs to the globin family. In terms of assembly, heterotetramer of two alpha chains and two beta chains. In terms of tissue distribution, red blood cells.

Its function is as follows. Involved in oxygen transport from the lung to the various peripheral tissues. The protein is Hemoglobin subunit beta-1/2 (HBB1) of Oryctolagus cuniculus (Rabbit).